The primary structure comprises 449 residues: Phosphoglucosamine mutase (449 aa).

The active-site Phosphoserine intermediate is the serine 102. Residues serine 102, aspartate 241, aspartate 243, and aspartate 245 each contribute to the Mg(2+) site. At serine 102 the chain carries Phosphoserine.

Belongs to the phosphohexose mutase family. Mg(2+) serves as cofactor. Activated by phosphorylation.

The catalysed reaction is alpha-D-glucosamine 1-phosphate = D-glucosamine 6-phosphate. In terms of biological role, catalyzes the conversion of glucosamine-6-phosphate to glucosamine-1-phosphate. The polypeptide is Phosphoglucosamine mutase (Roseobacter denitrificans (strain ATCC 33942 / OCh 114) (Erythrobacter sp. (strain OCh 114))).